The sequence spans 666 residues: Probable potassium transport system protein Kup (666 aa).

12 consecutive transmembrane segments (helical) span residues 16-36 (GFIIALGIVYGDIGTSPLYTI), 58-78 (ISLIIWTLTLITTIKYVLIAL), 100-120 (PWLIIPAMIGGATLLSDGALT), 141-161 (IYQNQTNVIITTLVILIVLFG), 165-185 (FGTGFIGKIFGPVMFIWFSFL), 221-241 (IFILGSIFLATTGAEALYSDL), 253-273 (WPFVKMCIVLSYCGQAAWILA), 294-314 (VYLVSLATLAAIIASQALISG), 343-363 (LYIPVINWILFAVTSCTVLAF), 373-393 (YGLAITITMLMTTILLKYYLI), 399-419 (PILAHLVMAFFALVEFIFFLA), and 424-444 (FMHGGYAVVILALAIVFVMFI).

This sequence belongs to the HAK/KUP transporter (TC 2.A.72) family.

It is found in the cell membrane. It catalyses the reaction K(+)(in) + H(+)(in) = K(+)(out) + H(+)(out). Its function is as follows. Transport of potassium into the cell. Likely operates as a K(+):H(+) symporter. The sequence is that of Probable potassium transport system protein Kup from Streptococcus pyogenes serotype M1.